A 956-amino-acid chain; its full sequence is Netrin receptor UNC5D (956 aa).

The first 30 residues, 1-30 (MGTGAADRSRGARWWLPWLGLCFWAAGAEA), serve as a signal peptide directing secretion. The Extracellular portion of the chain corresponds to 31 to 382 (ARGADSGEVL…SRRGIENASD (352 aa)). In terms of domain architecture, Ig-like spans 52–149 (PHFIEEPEDA…LGTSKSRKAS (98 aa)). Intrachain disulfides connect cysteine 73–cysteine 134, cysteine 85–cysteine 132, cysteine 178–cysteine 229, cysteine 262–cysteine 299, cysteine 266–cysteine 303, cysteine 277–cysteine 289, cysteine 318–cysteine 352, cysteine 322–cysteine 357, and cysteine 330–cysteine 342. Residues 89–91 (WVH) are important for interaction with FLRT2. 2 N-linked (GlcNAc...) asparagine glycosylation sites follow: asparagine 115 and asparagine 226. An Ig-like C2-type domain is found at 164–242 (QGREVPIEGM…NIVAKRRSLS (79 aa)). TSP type-1 domains are found at residues 250-304 (NGGW…ALCP) and 306-358 (DGSW…GLCI). Residues 383–403 (IALYSGLGAAVVAVAVLVIGV) form a helical membrane-spanning segment. The Cytoplasmic segment spans residues 404 to 956 (TLYRRSHSDY…DFNYSRQNGL (553 aa)). In terms of domain architecture, ZU5 spans 545 to 685 (LRTTGVFGHL…FGTYALTGEP (141 aa)). Positions 862–939 (QRICATFDTP…RTHTKLSNIT (78 aa)) constitute a Death domain.

Belongs to the unc-5 family. Interacts (via extracellular domain) with FLRT2 and FLRT3 (via extracellular domain); the interaction is direct. Has higher affinity for FLRT2. Identified in a complex with FLRT3 and ADGRL3; does not interact with ADGRL3 by itself. Proteolytically cleaved by caspases during apoptosis. The cleavage does not take place when the receptor is associated with netrin ligand. Its cleavage by caspases is required to induce apoptosis.

The protein localises to the cell membrane. In terms of biological role, receptor for the netrin NTN4 that promotes neuronal cell survival. Plays a role in cell-cell adhesion and cell guidance. Receptor for netrin involved in cell migration. Plays a role in axon guidance by mediating axon repulsion of neuronal growth cones in the developing nervous system upon ligand binding. May play a role in apoptosis in response to DNA damage. It also acts as a dependence receptor required for apoptosis induction when not associated with netrin ligand. Mediates cell-cell adhesion via its interaction with FLRT3 on an adjacent cell. This Rattus norvegicus (Rat) protein is Netrin receptor UNC5D.